We begin with the raw amino-acid sequence, 274 residues long: Regulator of G-protein signaling rgs-11 (274 aa).

Residues 137–256 enclose the RGS domain; that stretch reads SPGLLAASKY…LEDPLYLDLL (120 aa).

The chain is Regulator of G-protein signaling rgs-11 (rgs-11) from Caenorhabditis elegans.